The chain runs to 210 residues: Large ribosomal subunit protein uL3 (210 aa).

Residues 119 to 143 (GYQGNIKKDGQSRGPMAHGSRYHRR) form a disordered region.

It belongs to the universal ribosomal protein uL3 family. As to quaternary structure, part of the 50S ribosomal subunit. Forms a cluster with proteins L14 and L19.

One of the primary rRNA binding proteins, it binds directly near the 3'-end of the 23S rRNA, where it nucleates assembly of the 50S subunit. In Lacticaseibacillus casei (strain BL23) (Lactobacillus casei), this protein is Large ribosomal subunit protein uL3.